Here is a 215-residue protein sequence, read N- to C-terminus: Dual specificity phosphatase 29 (215 aa).

Positions 53–201 (HVNEVWPRLH…LRELDKQLVK (149 aa)) constitute a Tyrosine-protein phosphatase domain. A substrate-binding site is contributed by 145–152 (HCAMGRSR). Cys-146 functions as the Phosphocysteine intermediate in the catalytic mechanism.

It belongs to the protein-tyrosine phosphatase family. Non-receptor class dual specificity subfamily. As to quaternary structure, homodimer. Interacts with PRKAA2. Skeletal muscle, liver and adipose tissue.

The protein resides in the cytoplasm. The protein localises to the nucleus. The catalysed reaction is O-phospho-L-tyrosyl-[protein] + H2O = L-tyrosyl-[protein] + phosphate. The enzyme catalyses O-phospho-L-seryl-[protein] + H2O = L-seryl-[protein] + phosphate. It catalyses the reaction O-phospho-L-threonyl-[protein] + H2O = L-threonyl-[protein] + phosphate. Functionally, dual specificity phosphatase able to dephosphorylate phosphotyrosine, phosphoserine and phosphothreonine residues within the same substrate, with a preference for phosphotyrosine as a substrate. Involved in the modulation of intracellular signaling cascades. In skeletal muscle regulates systemic glucose homeostasis by activating, AMPK, an energy sensor protein kinase. Affects MAP kinase signaling though modulation of the MAPK1/2 cascade in skeletal muscle promoting muscle cell differentiation, development and atrophy. In Mus musculus (Mouse), this protein is Dual specificity phosphatase 29.